The chain runs to 216 residues: Peroxiredoxin (216 aa).

A Thioredoxin domain is found at 2 to 158; sequence VVIGEKFPEV…ILRLVKALKI (157 aa). The active-site Cysteine sulfenic acid (-SOH) intermediate is the cysteine 46. Arginine 121 contributes to the substrate binding site. Residues cysteine 205 and cysteine 211 are joined by a disulfide bond.

It belongs to the peroxiredoxin family. Prx6 subfamily. As to quaternary structure, homodecamer. Pentamer of dimers that assemble into a ring structure.

It localises to the cytoplasm. It catalyses the reaction a hydroperoxide + [thioredoxin]-dithiol = an alcohol + [thioredoxin]-disulfide + H2O. Thiol-specific peroxidase that catalyzes the reduction of hydrogen peroxide and organic hydroperoxides to water and alcohols, respectively. Plays a role in cell protection against oxidative stress by detoxifying peroxides. In Pyrococcus abyssi (strain GE5 / Orsay), this protein is Peroxiredoxin.